A 569-amino-acid chain; its full sequence is Dihydroxy-acid dehydratase (569 aa).

Cys-61 provides a ligand contact to [2Fe-2S] cluster. Asp-93 contacts Mg(2+). Cys-134 contributes to the [2Fe-2S] cluster binding site. Mg(2+) contacts are provided by Asp-135 and Lys-136. Lys-136 carries the post-translational modification N6-carboxylysine. Cys-211 lines the [2Fe-2S] cluster pocket. Glu-462 is a binding site for Mg(2+). Ser-488 serves as the catalytic Proton acceptor.

The protein belongs to the IlvD/Edd family. In terms of assembly, homodimer. The cofactor is [2Fe-2S] cluster. It depends on Mg(2+) as a cofactor.

The enzyme catalyses (2R)-2,3-dihydroxy-3-methylbutanoate = 3-methyl-2-oxobutanoate + H2O. It catalyses the reaction (2R,3R)-2,3-dihydroxy-3-methylpentanoate = (S)-3-methyl-2-oxopentanoate + H2O. Its pathway is amino-acid biosynthesis; L-isoleucine biosynthesis; L-isoleucine from 2-oxobutanoate: step 3/4. It participates in amino-acid biosynthesis; L-valine biosynthesis; L-valine from pyruvate: step 3/4. Functions in the biosynthesis of branched-chain amino acids. Catalyzes the dehydration of (2R,3R)-2,3-dihydroxy-3-methylpentanoate (2,3-dihydroxy-3-methylvalerate) into 2-oxo-3-methylpentanoate (2-oxo-3-methylvalerate) and of (2R)-2,3-dihydroxy-3-methylbutanoate (2,3-dihydroxyisovalerate) into 2-oxo-3-methylbutanoate (2-oxoisovalerate), the penultimate precursor to L-isoleucine and L-valine, respectively. The polypeptide is Dihydroxy-acid dehydratase (Tropheryma whipplei (strain Twist) (Whipple's bacillus)).